A 344-amino-acid chain; its full sequence is tRNA(Ile)-lysidine synthase (344 aa).

30–35 (SGGQDS) serves as a coordination point for ATP. The disordered stretch occupies residues 323-344 (PPPPAPVPPDPGERSPPPSPLY).

Belongs to the tRNA(Ile)-lysidine synthase family.

The protein localises to the cytoplasm. The enzyme catalyses cytidine(34) in tRNA(Ile2) + L-lysine + ATP = lysidine(34) in tRNA(Ile2) + AMP + diphosphate + H(+). Functionally, ligates lysine onto the cytidine present at position 34 of the AUA codon-specific tRNA(Ile) that contains the anticodon CAU, in an ATP-dependent manner. Cytidine is converted to lysidine, thus changing the amino acid specificity of the tRNA from methionine to isoleucine. This is tRNA(Ile)-lysidine synthase from Thermosynechococcus vestitus (strain NIES-2133 / IAM M-273 / BP-1).